Here is a 252-residue protein sequence, read N- to C-terminus: 3-dehydroquinate dehydratase (252 aa).

3-dehydroquinate-binding positions include serine 21, 46–48 (EWR), and arginine 82. The active-site Proton donor/acceptor is the histidine 143. The active-site Schiff-base intermediate with substrate is lysine 170. Residues arginine 213, serine 232, and glutamine 236 each contribute to the 3-dehydroquinate site.

Belongs to the type-I 3-dehydroquinase family. Homodimer.

It catalyses the reaction 3-dehydroquinate = 3-dehydroshikimate + H2O. It participates in metabolic intermediate biosynthesis; chorismate biosynthesis; chorismate from D-erythrose 4-phosphate and phosphoenolpyruvate: step 3/7. Its activity is regulated as follows. Inhibited by (2R)-2-methyl-3-dehydroquinic acid. Its function is as follows. Involved in the third step of the chorismate pathway, which leads to the biosynthesis of aromatic amino acids. Catalyzes the cis-dehydration of 3-dehydroquinate (DHQ) and introduces the first double bond of the aromatic ring to yield 3-dehydroshikimate. The reaction involves the formation of an imine intermediate between the keto group of 3-dehydroquinate and the epsilon-amino group of a Lys-170 at the active site. The sequence is that of 3-dehydroquinate dehydratase from Salmonella typhimurium (strain LT2 / SGSC1412 / ATCC 700720).